Consider the following 628-residue polypeptide: ATP-dependent zinc metalloprotease FtsH 4 (628 aa).

The Cytoplasmic portion of the chain corresponds to 1–14 (MAIKPQPQWQRRLA). A helical transmembrane segment spans residues 15–35 (SVLLWGSTIYLLVNLLAPALF). Residues 36–119 (RSQPPQVPYS…AAAPPAKNSW (84 aa)) lie on the Lumenal side of the membrane. A helical membrane pass occupies residues 120–140 (FGTLLSWVIPPLIFVGIWSFF). Over 141–628 (LNRNNNGAPG…QVQAPGTLVV (488 aa)) the chain is Cytoplasmic. Residue 214–221 (GPPGTGKT) participates in ATP binding. Zn(2+) is bound at residue H438. The active site involves E439. 2 residues coordinate Zn(2+): H442 and D515.

The protein in the central section; belongs to the AAA ATPase family. This sequence in the C-terminal section; belongs to the peptidase M41 family. Homohexamer. Requires Zn(2+) as cofactor.

The protein resides in the cellular thylakoid membrane. Acts as a processive, ATP-dependent zinc metallopeptidase for both cytoplasmic and membrane proteins. Plays a role in the quality control of integral membrane proteins. The protein is ATP-dependent zinc metalloprotease FtsH 4 of Synechocystis sp. (strain ATCC 27184 / PCC 6803 / Kazusa).